The sequence spans 401 residues: Argininosuccinate synthase (401 aa).

ATP-binding positions include 9 to 17 (AYSGGLDTS) and Ala-36. L-citrulline is bound by residues Tyr-87 and Ser-92. An ATP-binding site is contributed by Gly-117. L-aspartate contacts are provided by Thr-119, Asn-123, and Asp-124. Asn-123 lines the L-citrulline pocket. The L-citrulline site is built by Arg-127, Ser-176, Ser-185, Glu-261, and Tyr-273.

The protein belongs to the argininosuccinate synthase family. Type 1 subfamily. Homotetramer.

It is found in the cytoplasm. It carries out the reaction L-citrulline + L-aspartate + ATP = 2-(N(omega)-L-arginino)succinate + AMP + diphosphate + H(+). The protein operates within amino-acid biosynthesis; L-arginine biosynthesis; L-arginine from L-ornithine and carbamoyl phosphate: step 2/3. The protein is Argininosuccinate synthase of Syntrophobacter fumaroxidans (strain DSM 10017 / MPOB).